Consider the following 338-residue polypeptide: Histidinol-phosphate aminotransferase (338 aa).

The residue at position 204 (K204) is an N6-(pyridoxal phosphate)lysine.

It belongs to the class-II pyridoxal-phosphate-dependent aminotransferase family. Histidinol-phosphate aminotransferase subfamily. Pyridoxal 5'-phosphate serves as cofactor.

It carries out the reaction L-histidinol phosphate + 2-oxoglutarate = 3-(imidazol-4-yl)-2-oxopropyl phosphate + L-glutamate. It participates in amino-acid biosynthesis; L-histidine biosynthesis; L-histidine from 5-phospho-alpha-D-ribose 1-diphosphate: step 7/9. This is Histidinol-phosphate aminotransferase from Pyrococcus furiosus (strain ATCC 43587 / DSM 3638 / JCM 8422 / Vc1).